Reading from the N-terminus, the 362-residue chain is Probable cinnamyl alcohol dehydrogenase 8D (362 aa).

Cys45 is a binding site for Zn(2+). Thr47 contacts NADP(+). Zn(2+) is bound by residues His67, Glu68, Cys98, Cys101, Cys104, Cys112, and Cys161. Residues Thr165, 186 to 191 (GLGGLG), 209 to 214 (SSSPAK), Thr249, Gly273, and 296 to 298 (NGV) each bind NADP(+).

This sequence belongs to the zinc-containing alcohol dehydrogenase family. Homodimer. Zn(2+) is required as a cofactor.

It carries out the reaction (E)-cinnamyl alcohol + NADP(+) = (E)-cinnamaldehyde + NADPH + H(+). The catalysed reaction is (E)-coniferol + NADP(+) = (E)-coniferaldehyde + NADPH + H(+). The enzyme catalyses (E)-sinapyl alcohol + NADP(+) = (E)-sinapaldehyde + NADPH + H(+). It catalyses the reaction (E)-4-coumaroyl alcohol + NADP(+) = (E)-4-coumaraldehyde + NADPH + H(+). It carries out the reaction (E)-caffeyl alcohol + NADP(+) = (E)-caffeyl aldehyde + NADPH + H(+). It participates in aromatic compound metabolism; phenylpropanoid biosynthesis. In terms of biological role, involved in lignin biosynthesis. Catalyzes the final step specific for the production of lignin monomers. Catalyzes the NADPH-dependent reduction of coniferaldehyde, 5-hydroxyconiferaldehyde, sinapaldehyde, 4-coumaraldehyde and caffeyl aldehyde to their respective alcohols. This chain is Probable cinnamyl alcohol dehydrogenase 8D, found in Oryza sativa subsp. japonica (Rice).